A 521-amino-acid polypeptide reads, in one-letter code: Phosphoethanolamine transferase EptA (521 aa).

6 helical membrane passes run 18–38 (AGLL…FVYV), 47–67 (FIAM…LALG), 79–99 (IVFS…KVFL), 118–138 (FLSV…GYVI), 150–170 (APFL…LANT), and 182–202 (FIGG…VSAL).

It belongs to the phosphoethanolamine transferase family. EptA subfamily.

The protein localises to the cell inner membrane. It functions in the pathway bacterial outer membrane biogenesis; LPS lipid A biosynthesis. Functionally, probably catalyzes the addition of a phosphoethanolamine moiety to the dephosphorylated 1-position of the disaccharide backbone of lipid A. Lipid A that is 1-phosphorylated is not a substrate for this enzyme. The sequence is that of Phosphoethanolamine transferase EptA from Helicobacter pylori (strain ATCC 700392 / 26695) (Campylobacter pylori).